The sequence spans 431 residues: MTKSAELYEKAQQTIPGGVNSPVRAFNGVGGSPIFVERADGPLIFDADGKAYIDYVGSWGPMILGHNHVVIRDAVIAAAQRGLSFGAPTETEIKMAELVSEMVPSMEQLRMVSSGTEATMSAIRLARGFTGRDKILKFEGCYHGHADSLLVKAGSGALTLGQPSSPGVPADFAKLTLTATFNNLDSVREIFAANKGEIACIIVEPVAGNMNCIPPVEGFHEGLREICDQEGALLIFDEVMTGFRVAEGCAQAYYNIKPDLTCLGKVIGGGMPVGAFGGRKDVMQYIAPTGPVYQAGTLSGNPVAMAAGYACLNLLREEGNEKRLASKTKQLANGFKQLADKHGIPMLVHQVGGMFGFFFTDQETVTCYEDVTKCDVERFKRFFHLMLDHGVYLAPSAFEASFTSLAHGSKELDATLEAADRSLAIIAAESK.

Lysine 265 carries the N6-(pyridoxal phosphate)lysine modification.

It belongs to the class-III pyridoxal-phosphate-dependent aminotransferase family. HemL subfamily. As to quaternary structure, homodimer. It depends on pyridoxal 5'-phosphate as a cofactor.

The protein resides in the cytoplasm. It catalyses the reaction (S)-4-amino-5-oxopentanoate = 5-aminolevulinate. The protein operates within porphyrin-containing compound metabolism; protoporphyrin-IX biosynthesis; 5-aminolevulinate from L-glutamyl-tRNA(Glu): step 2/2. The chain is Glutamate-1-semialdehyde 2,1-aminomutase from Vibrio atlanticus (strain LGP32) (Vibrio splendidus (strain Mel32)).